A 646-amino-acid polypeptide reads, in one-letter code: Ribonuclease Y (646 aa).

Residues 4–24 (VLVVLLSLVLVVLSVLILAVA) form a helical membrane-spanning segment. 2 disordered regions span residues 43–62 (PRTP…DFDE) and 69–118 (LPAP…HGGS). The KH domain maps to 336–402 (VVTVLHLPGD…RITLAALVSD (67 aa)). The HD domain maps to 462-555 (VLAHLIESAH…TQAADQISGG (94 aa)).

It belongs to the RNase Y family.

It localises to the cell membrane. Its function is as follows. Endoribonuclease that initiates mRNA decay. The sequence is that of Ribonuclease Y from Frankia casuarinae (strain DSM 45818 / CECT 9043 / HFP020203 / CcI3).